The sequence spans 324 residues: Transcription factor TCP24 (324 aa).

One can recognise a TCP domain in the interval 50–108; it reads GKDRHSKVLTSKGLRDRRIRLSVATAIQFYDLQDRLGFDQPSKAVEWLINAASDSITDL. Disordered regions lie at residues 122 to 215 and 261 to 297; these read QNQT…PMNH and QRSSISSSSSSSSPMDSQSISFFMATPPPLDHHNHQL. The segment covering 127-142 has biased composition (low complexity); the sequence is SACSSGTSESSLLSLS. The region spanning 144–162 is the R domain; it reads TEIRGKARERARERTAKDR. A compositionally biased stretch (basic and acidic residues) spans 144–167; the sequence is TEIRGKARERARERTAKDRDKDLQ. Composition is skewed to polar residues over residues 168 to 192 and 200 to 212; these read NAHSSFTQLLTGGFDQQPSNRNWTG and VQLQIPNSSSQEP. Over residues 261-281 the composition is skewed to low complexity; it reads QRSSISSSSSSSSPMDSQSIS.

As to quaternary structure, forms a heterodimeric complex with ABAP1. Interacts with SPL. Expressed in cotyledons, particularly in the vascular region, in leaves, roots, stems, buds, flowers and siliques.

The protein resides in the nucleus. In terms of biological role, plays a pivotal role in the control of morphogenesis of shoot organs by negatively regulating the expression of boundary-specific genes such as CUC genes, probably through the induction of miRNA (e.g. miR164). In association with ABAP1, exerts a negative role in cell proliferation in leaves, possibly by inhibiting mitotic DNA replication. Participates in ovule development. The polypeptide is Transcription factor TCP24 (TCP24) (Arabidopsis thaliana (Mouse-ear cress)).